Reading from the N-terminus, the 294-residue chain is HTH-type transcriptional regulator XapR (294 aa).

The HTH lysR-type domain occupies 7–64 (TDLKLLRYFLAVAEELHFGRAAARLNMSQPPLSIHIKELENQLGTQLFIRHSRSVVLT). Residues 24-43 (FGRAAARLNMSQPPLSIHIK) constitute a DNA-binding region (H-T-H motif).

This sequence belongs to the LysR transcriptional regulatory family.

Positive regulator required for the expression of xapA and xapB. Binds to the inducer xanthosine. This chain is HTH-type transcriptional regulator XapR (xapR), found in Escherichia coli (strain K12).